The sequence spans 243 residues: Uridylate kinase (243 aa).

15–18 (KLSG) is a binding site for ATP. Positions 23-28 (GEEGFG) are involved in allosteric activation by GTP. Glycine 57 is a binding site for UMP. Residues glycine 58 and arginine 62 each contribute to the ATP site. UMP-binding positions include aspartate 77 and 138-145 (TGNPFCTT). Residues threonine 165, tyrosine 171, and aspartate 174 each coordinate ATP.

The protein belongs to the UMP kinase family. As to quaternary structure, homohexamer.

The protein resides in the cytoplasm. The catalysed reaction is UMP + ATP = UDP + ADP. The protein operates within pyrimidine metabolism; CTP biosynthesis via de novo pathway; UDP from UMP (UMPK route): step 1/1. Allosterically activated by GTP. Inhibited by UTP. Its function is as follows. Catalyzes the reversible phosphorylation of UMP to UDP. This Shewanella denitrificans (strain OS217 / ATCC BAA-1090 / DSM 15013) protein is Uridylate kinase.